Reading from the N-terminus, the 199-residue chain is Recombination protein RecR (199 aa).

The C4-type zinc finger occupies Cys58–Cys73. The region spanning Gly81–Pro176 is the Toprim domain.

The protein belongs to the RecR family.

May play a role in DNA repair. It seems to be involved in an RecBC-independent recombinational process of DNA repair. It may act with RecF and RecO. The protein is Recombination protein RecR of Paracoccus denitrificans (strain Pd 1222).